The sequence spans 585 residues: Phosphomethylpyrimidine synthase (585 aa).

Over residues 89–107 (RGDTESYEGRHVKPEDNGY) the composition is skewed to basic and acidic residues. Residues 89-116 (RGDTESYEGRHVKPEDNGYRSRNGSHQH) are disordered. Residues Asn199, Met228, Tyr257, His293, 313 to 315 (SRG), 354 to 357 (DGLR), and Glu393 contribute to the substrate site. His397 is a Zn(2+) binding site. Residue Tyr420 coordinates substrate. Zn(2+) is bound at residue His461. Cys541, Cys544, and Cys549 together coordinate [4Fe-4S] cluster.

The protein belongs to the ThiC family. [4Fe-4S] cluster is required as a cofactor.

It catalyses the reaction 5-amino-1-(5-phospho-beta-D-ribosyl)imidazole + S-adenosyl-L-methionine = 4-amino-2-methyl-5-(phosphooxymethyl)pyrimidine + CO + 5'-deoxyadenosine + formate + L-methionine + 3 H(+). It participates in cofactor biosynthesis; thiamine diphosphate biosynthesis. Functionally, catalyzes the synthesis of the hydroxymethylpyrimidine phosphate (HMP-P) moiety of thiamine from aminoimidazole ribotide (AIR) in a radical S-adenosyl-L-methionine (SAM)-dependent reaction. This is Phosphomethylpyrimidine synthase from Bacillus pumilus (strain SAFR-032).